A 127-amino-acid polypeptide reads, in one-letter code: UPF0738 protein Bsph_1225 (127 aa).

The protein belongs to the UPF0738 family.

This is UPF0738 protein Bsph_1225 from Lysinibacillus sphaericus (strain C3-41).